Here is an 892-residue protein sequence, read N- to C-terminus: Alanine--tRNA ligase (892 aa).

Zn(2+)-binding residues include histidine 594, histidine 598, cysteine 702, and histidine 706.

It belongs to the class-II aminoacyl-tRNA synthetase family. The cofactor is Zn(2+).

The protein localises to the cytoplasm. The catalysed reaction is tRNA(Ala) + L-alanine + ATP = L-alanyl-tRNA(Ala) + AMP + diphosphate. Functionally, catalyzes the attachment of alanine to tRNA(Ala) in a two-step reaction: alanine is first activated by ATP to form Ala-AMP and then transferred to the acceptor end of tRNA(Ala). Also edits incorrectly charged Ser-tRNA(Ala) and Gly-tRNA(Ala) via its editing domain. This chain is Alanine--tRNA ligase, found in Pyrobaculum arsenaticum (strain DSM 13514 / JCM 11321 / PZ6).